A 183-amino-acid polypeptide reads, in one-letter code: UPF0397 protein PBPRA2239 (183 aa).

A run of 5 helical transmembrane segments spans residues 8–28, 41–61, 69–89, 110–130, and 147–167; these read VVLIAIGAALYGIGGLPMFGI, AVLALFSVLFGPLVGFLVGFI, FAGWGVWLTWVLGSGLVGLII, FALFVFLAFLGNVIGYGCSAY, and LIIIAAGNTLLIAIVGHYILT.

The protein belongs to the UPF0397 family.

The protein localises to the cell membrane. The chain is UPF0397 protein PBPRA2239 from Photobacterium profundum (strain SS9).